The chain runs to 122 residues: Large ribosomal subunit protein uL14c (122 aa).

It belongs to the universal ribosomal protein uL14 family. In terms of assembly, part of the 50S ribosomal subunit.

Its subcellular location is the plastid. The protein localises to the chloroplast. Its function is as follows. Binds to 23S rRNA. In Panax ginseng (Korean ginseng), this protein is Large ribosomal subunit protein uL14c.